We begin with the raw amino-acid sequence, 123 residues long: Large ribosomal subunit protein bL12 (123 aa).

Belongs to the bacterial ribosomal protein bL12 family. In terms of assembly, homodimer. Part of the ribosomal stalk of the 50S ribosomal subunit. Forms a multimeric L10(L12)X complex, where L10 forms an elongated spine to which 2 to 4 L12 dimers bind in a sequential fashion. Binds GTP-bound translation factors.

Its function is as follows. Forms part of the ribosomal stalk which helps the ribosome interact with GTP-bound translation factors. Is thus essential for accurate translation. The polypeptide is Large ribosomal subunit protein bL12 (Albidiferax ferrireducens (strain ATCC BAA-621 / DSM 15236 / T118) (Rhodoferax ferrireducens)).